The primary structure comprises 1174 residues: HEAT repeat-containing protein 6 (1174 aa).

The stretch at 168 to 207 is one HEAT 1 repeat; it reads NELLGPTGILVNLCDPSQPDPELWREAIHCMANLCLGVPG. Disordered regions lie at residues 304 to 346 and 373 to 392; these read GRSP…EELK and LGPQKSPLDPHQGQVGKDHF. The span at 323-335 shows a compositional bias: basic residues; the sequence is SKKKRKAGKQKKG. Residues 336–346 show a composition bias toward basic and acidic residues; that stretch reads HQGEESKEELK. HEAT repeat units follow at residues 460-498, 523-560, and 566-603; these read GIGSPQSVSLMTIALKDSSPKTRACALQVLSAILDGSKQ, SIRELHRCLLLAIVAESSAQTLTQIIKCLANLVSNAPY, and GLLTRVWNQIKPYIRNKDVNVRVSSLTLLGAIVSAQVS. The interval 619 to 648 is disordered; it reads SQNSGSATPSDPESNRKESMLEGGKKNGLH. Over residues 631–648 the composition is skewed to basic and acidic residues; the sequence is ESNRKESMLEGGKKNGLH.

The polypeptide is HEAT repeat-containing protein 6 (heatr6) (Xenopus laevis (African clawed frog)).